The following is a 92-amino-acid chain: Acylphosphatase (92 aa).

One can recognise an Acylphosphatase-like domain in the interval 5-90; the sequence is TWRLVAHGRV…GEFAGFEFRP (86 aa). Active-site residues include Arg-20 and Asn-38.

It belongs to the acylphosphatase family.

It catalyses the reaction an acyl phosphate + H2O = a carboxylate + phosphate + H(+). The chain is Acylphosphatase (acyP) from Cupriavidus necator (strain ATCC 17699 / DSM 428 / KCTC 22496 / NCIMB 10442 / H16 / Stanier 337) (Ralstonia eutropha).